We begin with the raw amino-acid sequence, 730 residues long: Multifunctional procollagen lysine hydroxylase and glycosyltransferase (730 aa).

Residues 1–16 (MRVLPFLLPLIPVLLA) form the signal peptide. The tract at residues 20-280 (TDLPELVVVT…CGLEVKESEE (261 aa)) is required for glycosyltransferase activity. Residues 30–32 (VAT) and 98–100 (DAY) contribute to the UDP site. Mn(2+) contacts are provided by aspartate 98, aspartate 101, and histidine 242. 245–248 (GPSK) is a UDP binding site. Cysteine 268 and cysteine 271 are oxidised to a cystine. The interval 281 to 507 (VPLIALNLFI…YYGFLIVSDE (227 aa)) is accessory region. Cysteine 554 and cysteine 690 form a disulfide bridge. Residues arginine 590 and tyrosine 648 each contribute to the 2-oxoglutarate site. Residues 639–730 (ESNMMFVVRY…RYIMVSFINP (92 aa)) enclose the Fe2OG dioxygenase domain. Histidine 659 and aspartate 661 together coordinate Fe cation. Positions 664–707 (TFSIDIALNKKGRDYEGGGVRYIRYNCTVPADEVGYAMMFPGRL) are important for dimerization. Asparagine 689 carries N-linked (GlcNAc...) asparagine glycosylation. Histidine 711 is a binding site for Fe cation. Residue arginine 721 coordinates 2-oxoglutarate.

As to quaternary structure, homodimer. Fe(2+) serves as cofactor. L-ascorbate is required as a cofactor. The cofactor is Mn(2+).

It is found in the rough endoplasmic reticulum. It localises to the endoplasmic reticulum lumen. The protein localises to the endoplasmic reticulum membrane. Its subcellular location is the secreted. The protein resides in the extracellular space. It carries out the reaction L-lysyl-[collagen] + 2-oxoglutarate + O2 = (5R)-5-hydroxy-L-lysyl-[collagen] + succinate + CO2. The catalysed reaction is (5R)-5-hydroxy-L-lysyl-[collagen] + UDP-alpha-D-galactose = (5R)-5-O-(beta-D-galactosyl)-5-hydroxy-L-lysyl-[collagen] + UDP + H(+). The enzyme catalyses (5R)-5-O-(beta-D-galactosyl)-5-hydroxy-L-lysyl-[collagen] + UDP-alpha-D-glucose = (5R)-5-O-[alpha-D-glucosyl-(1-&gt;2)-beta-D-galactosyl]-5-hydroxy-L-lysyl-[collagen] + UDP + H(+). Multifunctional enzyme that catalyzes a series of post-translational modifications on Lys residues in procollagen. Catalyzes the formation of hydroxylysine residues in -Xaa-Lys-Gly- sequences in type IV collagens. Transfers galactose onto hydroxylysine groups, giving rise to galactosyl 5-hydroxylysine. Catalyzes the subsequent transfer of glucose moieties, giving rise to 1,2-glucosylgalactosyl-5-hydroxylysine residues. Essential for normal biosynthesis and secretion of type IV collagens. Essential for normal stability of the basement membrane. The polypeptide is Multifunctional procollagen lysine hydroxylase and glycosyltransferase (let-268) (Caenorhabditis elegans).